Consider the following 150-residue polypeptide: Small ribosomal subunit protein uS11 (150 aa).

Belongs to the universal ribosomal protein uS11 family. As to quaternary structure, part of the 30S ribosomal subunit. Interacts with proteins S7 and S18. Binds to IF-3.

Located on the platform of the 30S subunit, it bridges several disparate RNA helices of the 16S rRNA. Forms part of the Shine-Dalgarno cleft in the 70S ribosome. The chain is Small ribosomal subunit protein uS11 from Pelagibacter ubique (strain HTCC1062).